The chain runs to 141 residues: Nucleoside triphosphatase NudI (141 aa).

The Nudix hydrolase domain maps to 1–141; that stretch reads MRQRTIVCPL…RKTLSLKGLL (141 aa). The Nudix box signature appears at 38 to 59; that stretch reads GGVEPGERIEDALRREIREELG.

The protein belongs to the Nudix hydrolase family. NudI subfamily. In terms of assembly, monomer. Mg(2+) is required as a cofactor.

It carries out the reaction a ribonucleoside 5'-triphosphate + H2O = a ribonucleoside 5'-phosphate + diphosphate + H(+). The catalysed reaction is a 2'-deoxyribonucleoside 5'-triphosphate + H2O = a 2'-deoxyribonucleoside 5'-phosphate + diphosphate + H(+). It catalyses the reaction dUTP + H2O = dUMP + diphosphate + H(+). The enzyme catalyses dTTP + H2O = dTMP + diphosphate + H(+). It carries out the reaction dCTP + H2O = dCMP + diphosphate + H(+). In terms of biological role, catalyzes the hydrolysis of nucleoside triphosphates, with a preference for pyrimidine deoxynucleoside triphosphates (dUTP, dTTP and dCTP). This Escherichia fergusonii (strain ATCC 35469 / DSM 13698 / CCUG 18766 / IAM 14443 / JCM 21226 / LMG 7866 / NBRC 102419 / NCTC 12128 / CDC 0568-73) protein is Nucleoside triphosphatase NudI.